A 742-amino-acid polypeptide reads, in one-letter code: Alginate lyase (742 aa).

The first 26 residues, 1-26 (MRLQPLFVSLALAAPCALLPTASLSA), serve as a signal peptide directing secretion. Residues Arg143, 153 to 156 (QVLN), Gln204, His208, and 263 to 266 (YYQR) each bind substrate. Tyr264 functions as the Proton donor in the catalytic mechanism. Catalysis depends on His418, which acts as the Proton acceptor. Zn(2+) is bound by residues His420 and Asp438. Arg443 is a substrate binding site. Zn(2+) is bound at residue His469. Glu669 contributes to the substrate binding site.

This sequence belongs to the polysaccharide lyase 17 family. As to quaternary structure, homodimer. Requires Zn(2+) as cofactor.

The protein resides in the periplasm. It carries out the reaction Cleavage of 4-deoxy-alpha-L-erythro-hex-4-enopyranuronoside oligosaccharides into 4-deoxy-alpha-L-erythro-hex-4-enopyranuronate monosaccharides.. Its function is as follows. Polysaccharide lyase that catalyzes the depolymerization of alginate via a beta-elimination mechanism, cleaving the beta-1,4 glycosidic bond between two adjacent sugar residues. Acts specifically on alginate and each of its block structures, with highest activity toward poly-beta-D-mannuronate (poly-ManA). Shows an exolytic mode of action, producing unsaturated monomers. Displays a very low activity against poly-beta-D-glucuronate (poly-GlcA), and is not active on poly-alpha-D-galacturonate, hyaluronan, heparin, heparan sulfate and chondroitin sulfate. This Stenotrophomonas maltophilia (strain K279a) protein is Alginate lyase.